Reading from the N-terminus, the 303-residue chain is RELT-like protein 2 (303 aa).

The helical transmembrane segment at 15-35 threads the bilayer; sequence LYMLFLLVLVFFLMGLVGFMI. 2 disordered regions span residues 46–67 and 111–303; these read CRTS…DDDM and SSLQ…AGGV. At Ser-52 the chain carries Phosphoserine. Basic and acidic residues-rich tracts occupy residues 148–158 and 172–188; these read RSKEGKSRPRP and THIE…DGSP. Over residues 194–212 the composition is skewed to gly residues; that stretch reads GSGGGQDPGGGQGPGGGQP.

The protein belongs to the RELT family. As to quaternary structure, interacts with RELT, RELL1, OXSR1, PLSCR1 and TRAF2.

The protein resides in the cell membrane. Its function is as follows. Induces activation of MAPK14/p38 cascade, when overexpressed. Induces apoptosis, when overexpressed. This is RELT-like protein 2 (RELL2) from Bos taurus (Bovine).